A 117-amino-acid polypeptide reads, in one-letter code: Large ribosomal subunit protein bL20 (117 aa).

It belongs to the bacterial ribosomal protein bL20 family.

Functionally, binds directly to 23S ribosomal RNA and is necessary for the in vitro assembly process of the 50S ribosomal subunit. It is not involved in the protein synthesizing functions of that subunit. This chain is Large ribosomal subunit protein bL20, found in Rickettsia peacockii (strain Rustic).